Here is a 406-residue protein sequence, read N- to C-terminus: uncharacterized protein (406 aa).

This is an uncharacterized protein from Escherichia coli (strain K12).